A 326-amino-acid polypeptide reads, in one-letter code: B3 domain-containing protein At5g60130 (326 aa).

Positions 12-110 (PKFFKVYLPD…CFHFCIYEHR (99 aa)) form a DNA-binding region, TF-B3. Residues 124–222 (EEIKVESDSD…DEDERQYLDD (99 aa)) form a disordered region. A compositionally biased stretch (acidic residues) spans 143-199 (LSLDEDDDDSDYNCGEDNDSDDYADEAAVEKDDNDADDEDVDNVADDVPVEDDDYVE).

Its subcellular location is the nucleus. This Arabidopsis thaliana (Mouse-ear cress) protein is B3 domain-containing protein At5g60130.